We begin with the raw amino-acid sequence, 152 residues long: Transcription factor XE1.1 (152 aa).

Disordered regions lie at residues 1–54 and 123–152; these read RDDF…ANNA and KVSAVSAEPPNTHPGVHPGLTDTTNPMGHM. Basic and acidic residues-rich tracts occupy residues 7–22 and 38–54; these read DDMKSDDESSQKEMKS and PEQKVEREKERRMANNA. The bHLH domain occupies 47–100; that stretch reads ERRMANNARERLRVRDINEAFKELGRMCQLHLKSEKPQTKLLILHQAVAVILNL. A class A specific domain region spans residues 102-125; sequence QQVRERNLNPKAACLKRREEEKVS. The span at 143 to 152 shows a compositional bias: polar residues; the sequence is TDTTNPMGHM.

In terms of assembly, efficient DNA binding requires dimerization with another bHLH protein. Forms homo- or heterooligomers with myogenin, E12 and ITF2 proteins.

Its subcellular location is the nucleus. Its function is as follows. Transcriptional regulator. Involved in the initiation of neuronal differentiation. Activates transcription by binding to the E box-containing promoter. This Xenopus laevis (African clawed frog) protein is Transcription factor XE1.1.